The chain runs to 220 residues: Fructose-6-phosphate aldolase 2 (220 aa).

The active-site Schiff-base intermediate with substrate is lysine 85.

Belongs to the transaldolase family. Type 3A subfamily. In terms of assembly, homodecamer.

Its subcellular location is the cytoplasm. It carries out the reaction beta-D-fructose 6-phosphate = dihydroxyacetone + D-glyceraldehyde 3-phosphate. In terms of biological role, catalyzes the reversible formation of fructose 6-phosphate from dihydroxyacetone and D-glyceraldehyde 3-phosphate via an aldolization reaction. Can utilize hydroxyacetone as an alternative donor substrate. Is also able to catalyze the direct self-aldol addition of glycolaldehyde. Is less catalytically efficient than the isozyme FsaA. Does not display transaldolase activity. The sequence is that of Fructose-6-phosphate aldolase 2 (fsaB) from Escherichia coli (strain K12).